We begin with the raw amino-acid sequence, 116 residues long: Large ribosomal subunit protein uL18 (116 aa).

Belongs to the universal ribosomal protein uL18 family. Part of the 50S ribosomal subunit; part of the 5S rRNA/L5/L18/L25 subcomplex. Contacts the 5S and 23S rRNAs.

Functionally, this is one of the proteins that bind and probably mediate the attachment of the 5S RNA into the large ribosomal subunit, where it forms part of the central protuberance. In Saccharophagus degradans (strain 2-40 / ATCC 43961 / DSM 17024), this protein is Large ribosomal subunit protein uL18.